The primary structure comprises 256 residues: Protein FixA (256 aa).

The protein belongs to the ETF beta-subunit/FixA family. In terms of assembly, heterodimer of FixA and FixB.

The protein operates within amine and polyamine metabolism; carnitine metabolism. Functionally, required for anaerobic carnitine reduction. May bring reductant to CaiA. This Escherichia coli O81 (strain ED1a) protein is Protein FixA.